Reading from the N-terminus, the 336-residue chain is Phosphoribosylformylglycinamidine cyclo-ligase (336 aa).

This sequence belongs to the AIR synthase family.

Its subcellular location is the cytoplasm. The catalysed reaction is 2-formamido-N(1)-(5-O-phospho-beta-D-ribosyl)acetamidine + ATP = 5-amino-1-(5-phospho-beta-D-ribosyl)imidazole + ADP + phosphate + H(+). Its pathway is purine metabolism; IMP biosynthesis via de novo pathway; 5-amino-1-(5-phospho-D-ribosyl)imidazole from N(2)-formyl-N(1)-(5-phospho-D-ribosyl)glycinamide: step 2/2. The polypeptide is Phosphoribosylformylglycinamidine cyclo-ligase (Thermoanaerobacter sp. (strain X514)).